Reading from the N-terminus, the 266-residue chain is Uxu operon regulator (266 aa).

The 69-residue stretch at 23–91 (NRTYTRIGQL…KGSGVYVVRT (69 aa)) folds into the HTH gntR-type domain. A DNA-binding region (H-T-H motif) is located at residues 51–70 (EREISEKFGVSRTIVREAMV).

Its function is as follows. Repressor for the uxuRBA operon. This is Uxu operon regulator (uxuR) from Haemophilus influenzae (strain ATCC 51907 / DSM 11121 / KW20 / Rd).